Here is a 723-residue protein sequence, read N- to C-terminus: Tripartite motif-containing protein 42 (723 aa).

The RING-type zinc-finger motif lies at 146 to 192 (CPMCNRLRLHSFMLPCNHSLCEKCLRQLQKHAEVTENFFILICPMCS). B box-type zinc fingers lie at residues 235–280 (PILC…FVDT) and 285–326 (QDEK…TVSL). Zn(2+)-binding residues include Cys290, His293, Cys313, and His318. Positions 382–412 (KLRAILQEKEKIIMEQIENLEVSRQKEIEKY) form a coiled coil. The region spanning 434 to 492 (LKETGQVAFLQSAKILVDQIEEGIQNTFRPDPQLRLHSLHCIPLDFAELSNAIHELFPT) is the COS domain. The Fibronectin type-III domain occupies 603–701 (TPGPIVIYQT…DICKVVTPDG (99 aa)).

It belongs to the TRIM/RBCC family.

This is Tripartite motif-containing protein 42 (Trim42) from Mus musculus (Mouse).